Here is a 543-residue protein sequence, read N- to C-terminus: Organic anion transporter 3 (543 aa).

Over 1 to 21 (MTFAELVDRVGSKGPFQLLHT) the chain is Cytoplasmic. The helical transmembrane segment at 22 to 42 (VLLGLPILGMANHNLLQIFTA) threads the bilayer. The Extracellular portion of the chain corresponds to 43 to 124 (PTPAHHCRPP…LVCSSSKLKE (82 aa)). Residue asparagine 81 is glycosylated (N-linked (GlcNAc...) asparagine). A helical membrane pass occupies residues 125-145 (MAQSVFMAGILVGGLVLGALS). Residues 146–151 (DRFGRK) lie on the Cytoplasmic side of the membrane. Residues 152–172 (PILIFSYLLLGASGSGAAFSP) traverse the membrane as a helical segment. Residues 173 to 181 (TFSIYAVFR) lie on the Extracellular side of the membrane. A helical membrane pass occupies residues 182-202 (FLCGFSISGISLSTAILNVEW). The Cytoplasmic portion of the chain corresponds to 203–212 (VSTRFRAIKS). Residues 213-233 (IAVGFFYTFGQFILPGLAYAI) traverse the membrane as a helical segment. The Extracellular portion of the chain corresponds to 234 to 237 (PQWR). Residues 238–258 (WLQLTVSVPFLTFFLLSWWLP) form a helical membrane-spanning segment. Residues 259 to 328 (ESIRWMVLSG…FRTPVLRRVT (70 aa)) are Cytoplasmic-facing. Residues 329–349 (LCLSLAWFATGFAYYSLAMGV) form a helical membrane-spanning segment. The Extracellular segment spans residues 350–355 (EEFGVN). Residues 356 to 376 (LYVLQLIFGGVDVPAKFITML) form a helical membrane-spanning segment. The Cytoplasmic segment spans residues 377 to 388 (SISYLGRHITEG). The helical transmembrane segment at 389–409 (IVLLLAGGCILALIFVPLDLM) threads the bilayer. Residues 410–412 (TLR) are Extracellular-facing. The chain crosses the membrane as a helical span at residues 413-433 (TVLAVFGKGCLSGSFSCLFLY). Residues 434 to 472 (TSELYPTVIRQTGMGASNLWARVGSMTAPLVKITGELQP) are Cytoplasmic-facing. Residues 473–493 (FIPNIIFGTIALLGGSAALFL) traverse the membrane as a helical segment. Topologically, residues 494 to 543 (PETLNRPLPETIEDIETWSLRAKEPKPEPEAEKSSQRIPLQPCEPGPGPS) are extracellular. The disordered stretch occupies residues 513-543 (LRAKEPKPEPEAEKSSQRIPLQPCEPGPGPS). Basic and acidic residues predominate over residues 514–528 (RAKEPKPEPEAEKSS).

The protein belongs to the major facilitator (TC 2.A.1) superfamily. Organic cation transporter (TC 2.A.1.19) family. Expressed in kidney.

It is found in the basolateral cell membrane. The enzyme catalyses estrone 3-sulfate(out) + glutarate(in) = estrone 3-sulfate(in) + glutarate(out). The catalysed reaction is estrone 3-sulfate(in) + 2-oxoglutarate(out) = estrone 3-sulfate(out) + 2-oxoglutarate(in). It catalyses the reaction glutarate(in) + 2-oxoglutarate(out) = glutarate(out) + 2-oxoglutarate(in). It carries out the reaction urate(in) + 2-oxoglutarate(out) = urate(out) + 2-oxoglutarate(in). The enzyme catalyses taurocholate(out) + glutarate(in) = taurocholate(in) + glutarate(out). The catalysed reaction is dehydroepiandrosterone 3-sulfate(out) + glutarate(in) = dehydroepiandrosterone 3-sulfate(in) + glutarate(out). It catalyses the reaction prostaglandin F2alpha(out) + glutarate(in) = prostaglandin F2alpha(in) + glutarate(out). It carries out the reaction prostaglandin F2alpha(out) + 2-oxoglutarate(in) = prostaglandin F2alpha(in) + 2-oxoglutarate(out). The enzyme catalyses (R)-carnitine(out) + 2-oxoglutarate(in) = (R)-carnitine(in) + 2-oxoglutarate(out). The catalysed reaction is glutarate(in) + (R)-carnitine(out) = glutarate(out) + (R)-carnitine(in). It catalyses the reaction prostaglandin E2(out) + 2-oxoglutarate(in) = prostaglandin E2(in) + 2-oxoglutarate(out). It carries out the reaction prostaglandin E2(out) + glutarate(in) = prostaglandin E2(in) + glutarate(out). The enzyme catalyses urate(in) + glutarate(out) = urate(out) + glutarate(in). The catalysed reaction is taurocholate(out) + 2-oxoglutarate(in) = taurocholate(in) + 2-oxoglutarate(out). It catalyses the reaction dehydroepiandrosterone 3-sulfate(out) + 2-oxoglutarate(in) = dehydroepiandrosterone 3-sulfate(in) + 2-oxoglutarate(out). It carries out the reaction kynurenate(out) + a dicarboxylate(in) = kynurenate(in) + a dicarboxylate(out). The enzyme catalyses (indol-3-yl)acetate(out) + a dicarboxylate(in) = (indol-3-yl)acetate(in) + a dicarboxylate(out). The catalysed reaction is indoxyl sulfate(out) + a dicarboxylate(in) = indoxyl sulfate(in) + a dicarboxylate(out). It catalyses the reaction N-benzoylglycine(out) + a dicarboxylate(in) = N-benzoylglycine(in) + a dicarboxylate(out). It carries out the reaction 3-carboxy-4-methyl-5-propyl-2-furanpropanoate(out) + a dicarboxylate(in) = 3-carboxy-4-methyl-5-propyl-2-furanpropanoate(in) + a dicarboxylate(out). The enzyme catalyses (6R)-L-erythro-5,6,7,8-tetrahydrobiopterin(out) + a dicarboxylate(in) = (6R)-L-erythro-5,6,7,8-tetrahydrobiopterin(in) + a dicarboxylate(out). The catalysed reaction is L-erythro-7,8-dihydrobiopterin(out) + a dicarboxylate(in) = L-erythro-7,8-dihydrobiopterin(in) + a dicarboxylate(out). It catalyses the reaction L-sepiapterin(out) + a dicarboxylate(in) = L-sepiapterin(in) + a dicarboxylate(out). In terms of biological role, functions as an organic anion/dicarboxylate exchanger that couples organic anion uptake indirectly to the sodium gradient. Transports organic anions such as estrone 3-sulfate (E1S) and urate in exchange for dicarboxylates such as glutarate or ketoglutarate (2-oxoglutarate). Plays an important role in the excretion of endogenous and exogenous organic anions, especially from the kidney and the brain. E1S transport is pH- and chloride-dependent and may also involve E1S/cGMP exchange. Responsible for the transport of prostaglandin E2 (PGE2) and prostaglandin F2(alpha) (PGF2(alpha)) in the basolateral side of the renal tubule. Involved in the transport of neuroactive tryptophan metabolites kynurenate and xanthurenate. Functions as a biopterin transporters involved in the uptake and the secretion of coenzymes tetrahydrobiopterin (BH4), dihydrobiopterin (BH2) and sepiapterin to urine, thereby determining baseline levels of blood biopterins. May be involved in the basolateral transport of steviol, a metabolite of the popular sugar substitute stevioside. May participate in the detoxification/ renal excretion of drugs and xenobiotics, such as the histamine H(2)-receptor antagonists fexofenadine and cimetidine, the antibiotic benzylpenicillin (PCG), the anionic herbicide 2,4-dichloro-phenoxyacetate (2,4-D), the diagnostic agent p-aminohippurate (PAH), the antiviral acyclovir (ACV), and the mycotoxin ochratoxin (OTA), by transporting these exogenous organic anions across the cell membrane in exchange for dicarboxylates such as 2-oxoglutarate. Contributes to the renal uptake of potent uremic toxins (indoxyl sulfate (IS), indole acetate (IA), hippurate/N-benzoylglycine (HA) and 3-carboxy-4-methyl-5-propyl-2-furanpropionate (CMPF)), pravastatin, PCG, E1S and dehydroepiandrosterone sulfate (DHEAS), and is partly involved in the renal uptake of temocaprilat (an angiotensin-converting enzyme (ACE) inhibitor). May contribute to the release of cortisol in the adrenals. Involved in one of the detoxification systems on the choroid plexus (CP), removes substrates such as E1S or taurocholate (TC), PCG, 2,4-D and PAH, from the cerebrospinal fluid (CSF) to the blood for eventual excretion in urine and bile. Also contributes to the uptake of several other organic compounds such as the prostanoids prostaglandin E(2) and prostaglandin F(2-alpha), L-carnitine, and the therapeutic drugs allopurinol, 6-mercaptopurine (6-MP) and 5-fluorouracil (5-FU). Mediates the transport of PAH, PCG, and the statins pravastatin and pitavastatin, from the cerebrum into the blood circulation across the blood-brain barrier (BBB). In summary, plays a role in the efflux of drugs and xenobiotics, helping reduce their undesired toxicological effects on the body. The chain is Organic anion transporter 3 (SLC22A8) from Sus scrofa (Pig).